The sequence spans 215 residues: Pyrrolidone-carboxylate peptidase (215 aa).

Residues Glu-78, Cys-141, and His-165 contribute to the active site.

It belongs to the peptidase C15 family. In terms of assembly, homotetramer.

The protein resides in the cytoplasm. It carries out the reaction Release of an N-terminal pyroglutamyl group from a polypeptide, the second amino acid generally not being Pro.. Removes 5-oxoproline from various penultimate amino acid residues except L-proline. In Lactobacillus johnsonii (strain CNCM I-12250 / La1 / NCC 533), this protein is Pyrrolidone-carboxylate peptidase.